Consider the following 509-residue polypeptide: Maturase K (509 aa).

The protein belongs to the intron maturase 2 family. MatK subfamily.

It localises to the plastid. It is found in the chloroplast. In terms of biological role, usually encoded in the trnK tRNA gene intron. Probably assists in splicing its own and other chloroplast group II introns. The sequence is that of Maturase K from Solanum tuberosum (Potato).